The chain runs to 150 residues: SsrA-binding protein (150 aa).

The protein belongs to the SmpB family.

The protein localises to the cytoplasm. Functionally, required for rescue of stalled ribosomes mediated by trans-translation. Binds to transfer-messenger RNA (tmRNA), required for stable association of tmRNA with ribosomes. tmRNA and SmpB together mimic tRNA shape, replacing the anticodon stem-loop with SmpB. tmRNA is encoded by the ssrA gene; the 2 termini fold to resemble tRNA(Ala) and it encodes a 'tag peptide', a short internal open reading frame. During trans-translation Ala-aminoacylated tmRNA acts like a tRNA, entering the A-site of stalled ribosomes, displacing the stalled mRNA. The ribosome then switches to translate the ORF on the tmRNA; the nascent peptide is terminated with the 'tag peptide' encoded by the tmRNA and targeted for degradation. The ribosome is freed to recommence translation, which seems to be the essential function of trans-translation. This is SsrA-binding protein from Campylobacter jejuni (strain RM1221).